A 1268-amino-acid polypeptide reads, in one-letter code: Protein transport protein Sec24B (1268 aa).

Composition is skewed to low complexity over residues M1–A14 and G21–Q48. Disordered stretches follow at residues M1–Y71, A216–S263, Q303–Q345, and N362–Q451. An N-acetylserine modification is found at S2. Residue S55 is modified to Phosphoserine. A compositionally biased stretch (polar residues) spans N225–I234. 3 stretches are compositionally biased toward low complexity: residues S245–S255, S311–T332, and A365–T375. The residue at position 329 (T329) is a Phosphothreonine. Residues S376–G389 are compositionally biased toward acidic residues. Positions A426–P450 are enriched in pro residues. Zn(2+)-binding residues include C605, C608, C626, and C629. The tract at residues C605–C629 is zinc finger-like. The Gelsolin-like repeat unit spans residues P1141–F1213. S1224 bears the Phosphoserine mark.

The protein belongs to the SEC23/SEC24 family. SEC24 subfamily. As to quaternary structure, COPII is composed of at least five proteins: the Sec23/24 complex, the Sec13/31 complex and SAR1. Interacts with STING1; promoting STING1 translocation to COPII vesicles in a STEEP1-dependent manner. Interacts with RNF139. Interacts with TMED2 and TMED10. Interacts with CNIH4.

Its subcellular location is the cytoplasmic vesicle. The protein resides in the COPII-coated vesicle membrane. It is found in the endoplasmic reticulum membrane. It localises to the cytoplasm. The protein localises to the cytosol. Component of the coat protein complex II (COPII) which promotes the formation of transport vesicles from the endoplasmic reticulum (ER). The coat has two main functions, the physical deformation of the endoplasmic reticulum membrane into vesicles and the selection of cargo molecules for their transport to the Golgi complex. Plays a central role in cargo selection within the COPII complex and together with SEC24A may have a different specificity compared to SEC24C and SEC24D. May package preferentially cargos with cytoplasmic DxE or LxxLE motifs and may also recognize conformational epitopes. The protein is Protein transport protein Sec24B of Homo sapiens (Human).